The primary structure comprises 111 residues: Probable 4-amino-4-deoxy-L-arabinose-phosphoundecaprenol flippase subunit ArnE (111 aa).

3 helical membrane-spanning segments follow: residues 38-58 (LWLG…LLVL), 61-81 (LPVG…TLAA), and 91-111 (PRHW…GSAA). Residues 40–109 (LGLALICMGA…IISGIIILGS (70 aa)) enclose the EamA domain.

The protein belongs to the ArnE family. In terms of assembly, heterodimer of ArnE and ArnF.

Its subcellular location is the cell inner membrane. The protein operates within bacterial outer membrane biogenesis; lipopolysaccharide biosynthesis. Translocates 4-amino-4-deoxy-L-arabinose-phosphoundecaprenol (alpha-L-Ara4N-phosphoundecaprenol) from the cytoplasmic to the periplasmic side of the inner membrane. This Salmonella heidelberg (strain SL476) protein is Probable 4-amino-4-deoxy-L-arabinose-phosphoundecaprenol flippase subunit ArnE.